Consider the following 380-residue polypeptide: Cytochrome b (380 aa).

The next 4 helical transmembrane spans lie at 34–54 (FGSLLGLCLVSQILTGLFLAM), 78–99 (WLLRNLHANGASFMFICLYMHI), 114–134 (WNIGVMLLVLTMATAFLGYVL), and 179–199 (FFAFHFFLPFMIAGLSVVHLL). His84 and His98 together coordinate heme b. 2 residues coordinate heme b: His183 and His197. His202 serves as a coordination point for a ubiquinone. Helical transmembrane passes span 227 to 247 (YKDVVGFVVLLAGLVFIALFS), 289 to 309 (LGGVVALAMSIVVLFFMPFVH), 321 to 341 (LAQVLFWLMVVNVLLLTWLGG), and 348 to 368 (YIFLGQAASVIYFVNILLLIP).

The protein belongs to the cytochrome b family. As to quaternary structure, the cytochrome bc1 complex contains 3 respiratory subunits (MT-CYB, CYC1 and UQCRFS1), 2 core proteins (UQCRC1 and UQCRC2) and probably 6 low-molecular weight proteins. Requires heme b as cofactor.

It localises to the mitochondrion inner membrane. Functionally, component of the ubiquinol-cytochrome c reductase complex (complex III or cytochrome b-c1 complex) that is part of the mitochondrial respiratory chain. The b-c1 complex mediates electron transfer from ubiquinol to cytochrome c. Contributes to the generation of a proton gradient across the mitochondrial membrane that is then used for ATP synthesis. The chain is Cytochrome b (MT-CYB) from Branchiostoma floridae (Florida lancelet).